A 450-amino-acid polypeptide reads, in one-letter code: Glucose-6-phosphate isomerase (450 aa).

Residue Glu-291 is the Proton donor of the active site. Residues His-312 and Lys-426 contribute to the active site.

It belongs to the GPI family.

The protein resides in the cytoplasm. It catalyses the reaction alpha-D-glucose 6-phosphate = beta-D-fructose 6-phosphate. Its pathway is carbohydrate biosynthesis; gluconeogenesis. It participates in carbohydrate degradation; glycolysis; D-glyceraldehyde 3-phosphate and glycerone phosphate from D-glucose: step 2/4. Functionally, catalyzes the reversible isomerization of glucose-6-phosphate to fructose-6-phosphate. This chain is Glucose-6-phosphate isomerase, found in Clostridium perfringens (strain ATCC 13124 / DSM 756 / JCM 1290 / NCIMB 6125 / NCTC 8237 / Type A).